A 276-amino-acid polypeptide reads, in one-letter code: Undecaprenyl-diphosphatase (276 aa).

The next 8 membrane-spanning stretches (helical) occupy residues 1–21 (MSWLQVIVLSIVQGLTEFLPV), 39–59 (AGASFTAVTQLGTEFAVLIYF), 84–104 (YRLGWFVIVGTIPIGVFGLLF), 115–135 (LWLVATALIVFSVVIAAAEYY), 159–179 (LALMPGVSRSGATISAGLFLG), 188–208 (FGFLLAIPAVLASGLFSLPDA), 222–242 (QLIVATVIAFVVGFAAIAWFL), and 253–273 (FVGYRVVLGVVVLALLGTGVL).

Belongs to the UppP family.

It is found in the cell membrane. The enzyme catalyses di-trans,octa-cis-undecaprenyl diphosphate + H2O = di-trans,octa-cis-undecaprenyl phosphate + phosphate + H(+). Its function is as follows. Catalyzes the dephosphorylation of undecaprenyl diphosphate (UPP). Confers resistance to bacitracin. The sequence is that of Undecaprenyl-diphosphatase from Mycolicibacterium smegmatis (strain ATCC 700084 / mc(2)155) (Mycobacterium smegmatis).